Consider the following 169-residue polypeptide: Prolyl-tRNA synthetase associated domain-containing protein 1 (169 aa).

The protein belongs to the PRORSD1 family.

The polypeptide is Prolyl-tRNA synthetase associated domain-containing protein 1 (Prorsd1) (Mus musculus (Mouse)).